Consider the following 370-residue polypeptide: DNA replication and repair protein RecF (370 aa).

30-37 lines the ATP pocket; that stretch reads GQNGMGKT.

This sequence belongs to the RecF family.

The protein resides in the cytoplasm. In terms of biological role, the RecF protein is involved in DNA metabolism; it is required for DNA replication and normal SOS inducibility. RecF binds preferentially to single-stranded, linear DNA. It also seems to bind ATP. The polypeptide is DNA replication and repair protein RecF (Bacteroides fragilis (strain YCH46)).